A 220-amino-acid chain; its full sequence is Aspartic protease inhibitor 4 (220 aa).

The first 23 residues, 1–23 (MMKCLFLLCLCLLPILVFSSTFT), serve as a signal peptide directing secretion. Residues 24 to 32 (SQNPINLPS) constitute a propeptide that is removed on maturation. The Vacuolar targeting signal motif lies at 26–31 (NPINLP). A glycan (N-linked (GlcNAc...) asparagine) is linked at Asn51. Cystine bridges form between Cys80-Cys125 and Cys174-Cys185.

The protein belongs to the protease inhibitor I3 (leguminous Kunitz-type inhibitor) family. Tubers.

The protein resides in the vacuole. Inhibits tightly cathepsin D (aspartic protease) and weakly trypsin (serine protease). May protect the plant by inhibiting proteases of invading organisms. This Solanum tuberosum (Potato) protein is Aspartic protease inhibitor 4.